We begin with the raw amino-acid sequence, 131 residues long: ER membrane protein complex subunit 5 (131 aa).

The Cytoplasmic portion of the chain corresponds to 1-3 (MAP). A helical transmembrane segment spans residues 4–22 (SLWKGLVGIGLFALAHAAF). Residues 23–43 (SAAQHRSYMRLTEKEDESLPI) are Lumenal-facing. The helical transmembrane segment at 44-63 (DIVLQTLLAFAVTCYGIVHI) threads the bilayer. Residues 64–131 (AGEFKDMDAT…KLRKLESLRR (68 aa)) are Cytoplasmic-facing. Serine 120 carries the post-translational modification Phosphoserine.

The protein belongs to the membrane magnesium transporter (TC 1.A.67) family. Component of the ER membrane protein complex (EMC).

It localises to the endoplasmic reticulum membrane. The protein localises to the golgi apparatus membrane. It is found in the early endosome membrane. Its function is as follows. Part of the endoplasmic reticulum membrane protein complex (EMC) that enables the energy-independent insertion into endoplasmic reticulum membranes of newly synthesized membrane proteins. Preferentially accommodates proteins with transmembrane domains that are weakly hydrophobic or contain destabilizing features such as charged and aromatic residues. Involved in the cotranslational insertion of multi-pass membrane proteins in which stop-transfer membrane-anchor sequences become ER membrane spanning helices. It is also required for the post-translational insertion of tail-anchored/TA proteins in endoplasmic reticulum membranes. By mediating the proper cotranslational insertion of N-terminal transmembrane domains in an N-exo topology, with translocated N-terminus in the lumen of the ER, controls the topology of multi-pass membrane proteins like the G protein-coupled receptors. By regulating the insertion of various proteins in membranes, it is indirectly involved in many cellular processes. May be involved in Mg(2+) transport. The polypeptide is ER membrane protein complex subunit 5 (Homo sapiens (Human)).